Here is a 175-residue protein sequence, read N- to C-terminus: Myosin regulatory light chain 2, atrial isoform (175 aa).

Ala-2 is subject to N-acetylalanine. Phosphoserine is present on residues Ser-22 and Ser-23. 3 consecutive EF-hand domains span residues 32-67 (AQIQ…LGKV), 102-137 (DPEE…QADK), and 138-173 (FSPA…GDEK). The Ca(2+) site is built by Asp-45, Asn-47, Asp-49, and Asp-56.

Myosin is a hexamer of 2 heavy chains and 4 light chains. Predominantly expressed in adult atrial muscle.

In Homo sapiens (Human), this protein is Myosin regulatory light chain 2, atrial isoform (MYL7).